Here is a 731-residue protein sequence, read N- to C-terminus: Wall-associated receptor kinase-like 5 (731 aa).

An N-terminal signal peptide occupies residues 1–26; sequence MKTKTYRFVCLVASVLTLQLMNGSSA. The Extracellular segment spans residues 27–360; sequence ATPPPPPNSK…PAKPLVLQGV (334 aa). Residues Asn37, Asn43, Asn73, Asn96, Asn124, Asn137, Asn236, and Asn272 are each glycosylated (N-linked (GlcNAc...) asparagine). The tract at residues 285–342 is atypical EGF-like; that stretch reads CLCEYGYFSEMSYRNCYCSLGFTGNPYLRGGCIDNDDCKGPNICEEGTCVNVPGGYRC. Disulfide bonds link Cys287–Cys300, Cys322–Cys333, and Cys328–Cys342. Residues 361 to 381 form a helical membrane-spanning segment; it reads LLGLMGLLFLVVGTLGLIIFI. At 382–731 the chain is on the cytoplasmic side; sequence KKRRRIISSR…EDQVMEISRE (350 aa). Residues 432 to 705 enclose the Protein kinase domain; the sequence is FSVKRVLGKG…REASLELERI (274 aa). ATP is bound by residues 438–446 and Lys460; that span reads LGKGSQGTV. Tyr505 carries the post-translational modification Phosphotyrosine. The active-site Proton acceptor is the Asp557. 2 positions are modified to phosphothreonine: Thr591 and Thr596. Tyr604 is modified (phosphotyrosine). The tract at residues 709-731 is disordered; it reads PEDLEAHIENDDEEDQVMEISRE.

Belongs to the protein kinase superfamily. Ser/Thr protein kinase family. In terms of tissue distribution, preferentially expressed in roots and flowers.

Its subcellular location is the membrane. It catalyses the reaction L-seryl-[protein] + ATP = O-phospho-L-seryl-[protein] + ADP + H(+). It carries out the reaction L-threonyl-[protein] + ATP = O-phospho-L-threonyl-[protein] + ADP + H(+). Functionally, serine/threonine-protein kinase that may function as a signaling receptor of extracellular matrix component. May be involved in plant's response to pathogen infection. The protein is Wall-associated receptor kinase-like 5 (WAKL5) of Arabidopsis thaliana (Mouse-ear cress).